The sequence spans 115 residues: Replication initiation control protein YabA (115 aa).

H90, C92, C106, and C109 together coordinate Zn(2+).

Belongs to the YabA family. In terms of assembly, homotetramer. Interacts with both DnaA and DnaN, acting as a bridge between these two proteins. Requires Zn(2+) as cofactor.

The protein localises to the cytoplasm. It is found in the nucleoid. Involved in control of chromosome replication initiation. Inhibits the cooperative binding of DnaA to the oriC region, thus negatively regulating initiation of chromosome replication. Inhibits the ability of DnaA-ATP to form a helix on DNA; does not disassemble preformed DnaA-DNA helices. Decreases the residence time of DnaA on the chromosome at its binding sites (oriC, replication forks and promoter-binding sites). Tethers DnaA to the replication machinery via the DNA polymerase beta sliding clamp subunit (dnaN). Associates with oriC and other DnaA targets on the chromosome in a DnaA-dependent manner. This Staphylococcus epidermidis (strain ATCC 35984 / DSM 28319 / BCRC 17069 / CCUG 31568 / BM 3577 / RP62A) protein is Replication initiation control protein YabA.